A 187-amino-acid polypeptide reads, in one-letter code: Rusticyanin (187 aa).

Positions 1–32 (MYTQNTMKKNWYVTVGAAAALAATVGMGTAMA) are cleaved as a signal peptide. Residues 85–187 (SFEVHDKKNP…TGMFGKIVVK (103 aa)) form the Plastocyanin-like domain. 4 residues coordinate Cu cation: His-117, Cys-170, His-175, and Met-180.

In terms of assembly, monomer. Requires Cu cation as cofactor.

The protein localises to the periplasm. In terms of biological role, electron carrier from cytochrome c552 to the A-type oxidase. The sequence is that of Rusticyanin (rus) from Acidithiobacillus ferrooxidans (strain ATCC 23270 / DSM 14882 / CIP 104768 / NCIMB 8455) (Ferrobacillus ferrooxidans (strain ATCC 23270)).